Here is a 245-residue protein sequence, read N- to C-terminus: Probable phosphatase PC1_1798 (245 aa).

Zn(2+) is bound by residues H7, H9, H15, H40, E73, H101, H131, D192, and H194.

It belongs to the PHP family. As to quaternary structure, homotrimer. Requires Zn(2+) as cofactor.

The polypeptide is Probable phosphatase PC1_1798 (Pectobacterium carotovorum subsp. carotovorum (strain PC1)).